Here is a 556-residue protein sequence, read N- to C-terminus: MLNLCHALRGVRQFSCSVIVKVKCASCSIKLQDQDPSKPGYYTKPKSLPDSKLNPDLQDLKYLLFSQDIQLSKQAIQNDPDLKTKRDLLLRVICKRCSNALHHNNYNPEEFPESTLNDILNYVPRGSNVMHIVPFVEFPLHLDPNVLKRNDLDTTLVLTKSDQVFKDKNAVSKKVPIFMKQFLKNTLRIDSNKTFAISALKNWNISMFYNYFKNYTYLLGNPNVGKSTLINTLLQKYLGYKVKIDSTGKINSPSEEVMQEAFTNPKNFFKIQAAGVSHIPNLTRSGQAYQVGGKILFDLPGYSTSTSRLRLEEPIDERWLQRLRKTDLFNRKHIKQKTYESMKGTSQGGCYTVGGIFYLVPPKGSINQIVKYIPGPSKTFKNIEKGIDVFNSCNSSSGTHPLSRYCGIKSVICEKSQYKRYAIPPFIGSIEIVLKDIGYILLRTTGRYEFKGLHEIWIPRGIQVGIREPLENLIESGYQRYIETNGKESSCPRDRPIISSLYEMAPDEADTLNAVKKSYLEKTEKDLSARRFVDDDPYDLVQHLEKKKNPYWYYQW.

The transit peptide at 1–21 (MLNLCHALRGVRQFSCSVIVK) directs the protein to the mitochondrion. The 193-residue stretch at 113–305 (ESTLNDILNY…LFDLPGYSTS (193 aa)) folds into the CP-type G domain.

It belongs to the TRAFAC class YlqF/YawG GTPase family. GEP3 subfamily.

The protein resides in the mitochondrion. Interacts genetically with prohibitins and thus may be involved in the mitochondrial lipid metabolism. This is Genetic interactor of prohibitins 3, mitochondrial (GEP3) from Saccharomyces cerevisiae (strain AWRI1631) (Baker's yeast).